The primary structure comprises 262 residues: Glucosamine-6-phosphate deaminase (262 aa).

The Proton acceptor; for enolization step role is filled by Asp63. Asn129 functions as the For ring-opening step in the catalytic mechanism. The active-site Proton acceptor; for ring-opening step is the His131. The active-site For ring-opening step is Glu136.

Belongs to the glucosamine/galactosamine-6-phosphate isomerase family. NagB subfamily.

The enzyme catalyses alpha-D-glucosamine 6-phosphate + H2O = beta-D-fructose 6-phosphate + NH4(+). It participates in amino-sugar metabolism; N-acetylneuraminate degradation; D-fructose 6-phosphate from N-acetylneuraminate: step 5/5. Its function is as follows. Catalyzes the reversible isomerization-deamination of glucosamine 6-phosphate (GlcN6P) to form fructose 6-phosphate (Fru6P) and ammonium ion. This Bacillus cereus (strain B4264) protein is Glucosamine-6-phosphate deaminase.